The primary structure comprises 210 residues: Prolactin (210 aa).

The signal sequence occupies residues 1-23 (MARRSQGTKLHLAVLCLVVSCHA). 2 disulfide bridges follow: C69–C183 and C200–C210.

The protein belongs to the somatotropin/prolactin family.

The protein resides in the secreted. This chain is Prolactin (prl), found in Oncorhynchus mykiss (Rainbow trout).